Consider the following 360-residue polypeptide: tRNA/tmRNA (uracil-C(5))-methyltransferase (360 aa).

S-adenosyl-L-methionine-binding residues include Gln-185, Tyr-213, Asn-218, Glu-234, and Asp-294. Cys-319 (nucleophile) is an active-site residue. Glu-353 serves as the catalytic Proton acceptor.

It belongs to the class I-like SAM-binding methyltransferase superfamily. RNA M5U methyltransferase family. TrmA subfamily.

It catalyses the reaction uridine(54) in tRNA + S-adenosyl-L-methionine = 5-methyluridine(54) in tRNA + S-adenosyl-L-homocysteine + H(+). The catalysed reaction is uridine(341) in tmRNA + S-adenosyl-L-methionine = 5-methyluridine(341) in tmRNA + S-adenosyl-L-homocysteine + H(+). Its function is as follows. Dual-specificity methyltransferase that catalyzes the formation of 5-methyluridine at position 54 (m5U54) in all tRNAs, and that of position 341 (m5U341) in tmRNA (transfer-mRNA). The sequence is that of tRNA/tmRNA (uracil-C(5))-methyltransferase from Nitratiruptor sp. (strain SB155-2).